The chain runs to 472 residues: Trigger factor (472 aa).

Residues 172–257 enclose the PPIase FKBP-type domain; the sequence is GDEVRFDFKG…IKEITSVKPQ (86 aa). Composition is skewed to polar residues over residues 439–449 and 461–472; these read NQPKDTASTLS and KTSNTKKVASKK. The tract at residues 439–472 is disordered; the sequence is NQPKDTASTLSKQEDKPKVAKAKTSNTKKVASKK.

It belongs to the FKBP-type PPIase family. Tig subfamily.

The protein resides in the cytoplasm. The enzyme catalyses [protein]-peptidylproline (omega=180) = [protein]-peptidylproline (omega=0). In terms of biological role, involved in protein export. Acts as a chaperone by maintaining the newly synthesized protein in an open conformation. Functions as a peptidyl-prolyl cis-trans isomerase. This chain is Trigger factor, found in Ureaplasma urealyticum serovar 10 (strain ATCC 33699 / Western).